A 75-amino-acid polypeptide reads, in one-letter code: Small ribosomal subunit protein bS18 (75 aa).

The protein belongs to the bacterial ribosomal protein bS18 family. Part of the 30S ribosomal subunit. Forms a tight heterodimer with protein bS6.

Binds as a heterodimer with protein bS6 to the central domain of the 16S rRNA, where it helps stabilize the platform of the 30S subunit. The sequence is that of Small ribosomal subunit protein bS18 from Psychromonas ingrahamii (strain DSM 17664 / CCUG 51855 / 37).